Reading from the N-terminus, the 502-residue chain is mRNA cap guanine-N(7) methyltransferase (502 aa).

Residues 1–118 (MADENPQAQG…SQQEEAMRFS (118 aa)) form a disordered region. The span at 93-115 (LVDRETLRRRQEERERSQQEEAM) shows a compositional bias: basic and acidic residues. In terms of domain architecture, mRNA cap 0 methyltransferase spans 146–502 (SKIKGLRSFN…FYHAFCFYKV (357 aa)). 155-156 (NN) contributes to the mRNA binding site. S-adenosyl-L-methionine is bound by residues Lys159, Gly202, Asp226, Asp264, 307–309 (MFT), and Tyr312. The segment covering 360-369 (ERETAAKKEE) has biased composition (basic and acidic residues). The interval 360–381 (ERETAAKKEEAEPEDGEVEEDD) is disordered. The span at 370–381 (AEPEDGEVEEDD) shows a compositional bias: acidic residues.

It belongs to the class I-like SAM-binding methyltransferase superfamily. mRNA cap 0 methyltransferase family.

The protein localises to the nucleus. The enzyme catalyses a 5'-end (5'-triphosphoguanosine)-ribonucleoside in mRNA + S-adenosyl-L-methionine = a 5'-end (N(7)-methyl 5'-triphosphoguanosine)-ribonucleoside in mRNA + S-adenosyl-L-homocysteine. Its function is as follows. Responsible for methylating the 5'-cap structure of mRNAs. In Aspergillus oryzae (strain ATCC 42149 / RIB 40) (Yellow koji mold), this protein is mRNA cap guanine-N(7) methyltransferase (abd1).